Consider the following 156-residue polypeptide: MSRRHAAEKREVLPDPKFGNIVITKFMNSVMYAGKKSVAETIVYGALGLIEGKTKQDPLSVFVQALDNVMPTIEVRSRRVGGATYQVPVEVRSARRQALGIRWLITAARGRNEKTMTERLSAELLDASNNRGNAVKKREDVHKMAEANRAFSHYRW.

Belongs to the universal ribosomal protein uS7 family. As to quaternary structure, part of the 30S ribosomal subunit. Contacts proteins S9 and S11.

One of the primary rRNA binding proteins, it binds directly to 16S rRNA where it nucleates assembly of the head domain of the 30S subunit. Is located at the subunit interface close to the decoding center, probably blocks exit of the E-site tRNA. The polypeptide is Small ribosomal subunit protein uS7 (Rhodopseudomonas palustris (strain BisA53)).